The sequence spans 721 residues: Polyribonucleotide nucleotidyltransferase (721 aa).

Mg(2+) is bound by residues Asp485 and Asp491. One can recognise a KH domain in the interval 552-611 (PKIYIVKIHPDKIREIIGPGGKVIRELQAMSNTRIEVDDSGTVKIAASTEEEARIAIKAV). One can recognise an S1 motif domain in the interval 621-689 (GEIYEGEVVR…PEGKIRLSRK (69 aa)). The tract at residues 687-721 (SRKALLPAPEKGEEDEKSAPRSRRPGGNSDRRNNR) is disordered.

The protein belongs to the polyribonucleotide nucleotidyltransferase family. Mg(2+) serves as cofactor.

It localises to the cytoplasm. The catalysed reaction is RNA(n+1) + phosphate = RNA(n) + a ribonucleoside 5'-diphosphate. In terms of biological role, involved in mRNA degradation. Catalyzes the phosphorolysis of single-stranded polyribonucleotides processively in the 3'- to 5'-direction. This is Polyribonucleotide nucleotidyltransferase from Desulfosudis oleivorans (strain DSM 6200 / JCM 39069 / Hxd3) (Desulfococcus oleovorans).